The following is a 315-amino-acid chain: Olfactory receptor 4A8 (315 aa).

Residues 1-24 (MRQNNNITEFVLLGFSQYPDVQNA) lie on the Extracellular side of the membrane. Asparagine 6 carries N-linked (GlcNAc...) asparagine glycosylation. Residues 25–45 (LFVMFLLIYIVTMVGNLLIVV) form a helical membrane-spanning segment. Residues 46–57 (SIIASPFLGSPV) are Cytoplasmic-facing. A helical transmembrane segment spans residues 58–80 (YFFLACLSFIDAVYSTTISPVLI). At 81-95 (VDLLCDKKTISFPAC) the chain is on the extracellular side. A disulfide bridge links cysteine 95 with cysteine 177. Residues 96-116 (MGQLFIEHLFGDTDVFLLVVM) form a helical membrane-spanning segment. The Cytoplasmic portion of the chain corresponds to 117 to 139 (AYDRYVATCKPLRYLTIMNRQVC). The chain crosses the membrane as a helical span at residues 140-160 (ILLLVVAVTGGFLHSVFQILV). Over 161 to 193 (VYSLPFCGPNVIYHFFCNIYPLLDLECTDTYFV) the chain is Extracellular. The chain crosses the membrane as a helical span at residues 194 to 214 (GLAVVFNGGAICMVIFTLLLI). The Cytoplasmic portion of the chain corresponds to 215–235 (SYGVILNSLKTYSPEGRHKAP). The helical transmembrane segment at 236-256 (FICSSHFIMVILFFVPCIFLY) threads the bilayer. Topologically, residues 257 to 266 (VRPVSNFPID) are extracellular. The chain crosses the membrane as a helical span at residues 267 to 287 (KFLTVFYSVITPKLNPFIYML). Residues 288–315 (RNSEMRNAIENLLGYQSGKTGFRCSKLN) lie on the Cytoplasmic side of the membrane.

This sequence belongs to the G-protein coupled receptor 1 family.

It is found in the cell membrane. Odorant receptor. This is Olfactory receptor 4A8 (OR4A8) from Homo sapiens (Human).